Consider the following 174-residue polypeptide: Large ribosomal subunit protein uL6 (174 aa).

This sequence belongs to the universal ribosomal protein uL6 family. As to quaternary structure, part of the 50S ribosomal subunit.

Its function is as follows. This protein binds to the 23S rRNA, and is important in its secondary structure. It is located near the subunit interface in the base of the L7/L12 stalk, and near the tRNA binding site of the peptidyltransferase center. This Acidithiobacillus ferrooxidans (strain ATCC 23270 / DSM 14882 / CIP 104768 / NCIMB 8455) (Ferrobacillus ferrooxidans (strain ATCC 23270)) protein is Large ribosomal subunit protein uL6.